Reading from the N-terminus, the 411-residue chain is F-box protein At4g19940 (411 aa).

An F-box domain is found at arginine 29–leucine 75.

The protein is F-box protein At4g19940 of Arabidopsis thaliana (Mouse-ear cress).